We begin with the raw amino-acid sequence, 296 residues long: Aquaporin NIP1-1 (296 aa).

The residue at position 1 (methionine 1) is an N-acetylmethionine. 2 helical membrane passes run 57–77 (LIAE…SVVV) and 84–104 (VVTL…LIYS). Positions 114–116 (NPA) match the NPA 1 motif. The next 3 membrane-spanning stretches (helical) occupy residues 136-156 (VISQ…LFGL), 180-200 (AFTM…GVAT), and 205-225 (IGEL…LIAA). The NPA 2 signature appears at 233–235 (NPG). A helical transmembrane segment spans residues 249–269 (GIWIYLVAPTLGAIAGAWVYN). Serine 286 is subject to Phosphoserine.

Belongs to the MIP/aquaporin (TC 1.A.8) family. NIP (TC 1.A.8.12) subfamily. Expressed in roots.

It localises to the membrane. Water channel probably required to promote glycerol permeability and water transport across cell membranes. This Arabidopsis thaliana (Mouse-ear cress) protein is Aquaporin NIP1-1 (NIP1-1).